A 257-amino-acid chain; its full sequence is Triosephosphate isomerase, cytosolic (257 aa).

Positions 10 and 12 each coordinate substrate. His96 (electrophile) is an active-site residue. Glu167 functions as the Proton acceptor in the catalytic mechanism.

This sequence belongs to the triosephosphate isomerase family. In terms of assembly, homodimer. Higher levels found in leaves than in roots.

It localises to the cytoplasm. It catalyses the reaction D-glyceraldehyde 3-phosphate = dihydroxyacetone phosphate. It participates in carbohydrate biosynthesis; gluconeogenesis. Its pathway is carbohydrate degradation; glycolysis; D-glyceraldehyde 3-phosphate from glycerone phosphate: step 1/1. The protein is Triosephosphate isomerase, cytosolic (TPI) of Stellaria longipes (Longstalk starwort).